The sequence spans 788 residues: Autophagy-related protein 9 (788 aa).

Residues 1–14 (MDRDSPFADPDRSD) show a composition bias toward basic and acidic residues. Disordered regions lie at residues 1–22 (MDRD…PSNT), 87–108 (IGLR…DPED), and 124–153 (NPSA…ASAV). Residues 1–195 (MDRDSPFADP…RGAICIALSR (195 aa)) are Cytoplasmic-facing. Positions 97 to 108 (HGDDADEQDPED) are enriched in acidic residues. Residues 125-134 (PSASLSYASN) show a composition bias toward polar residues. A helical membrane pass occupies residues 196–216 (SLNLLTVAFVICFSTFLFGCI). Over 217 to 235 (DYSSIRHDGQLSDVIVGHC) the chain is Lumenal. The helical transmembrane segment at 236–256 (VAGFSPFATLVVVLLLAAFGW) threads the bilayer. At 257 to 416 (QAVQFVLGLS…ADLIEGLRRR (160 aa)) the chain is on the cytoplasmic side. Residues 307–332 (TTSLSSADEMELGQRTSSSLRRSHPQ) are disordered. An intramembrane segment occupies 417–437 (FLFMAVVNAIFAPFIVLYLLL). The Cytoplasmic segment spans residues 438-500 (YSFFRYFEEY…YMDQFPKEKT (63 aa)). A helical transmembrane segment spans residues 501–521 (AIVARFVAFVAGSFTAVLLLA). At 522–538 (SVMDPDVFVHFNITPQR) the chain is on the lumenal side. Residues 539 to 559 (NVLFYIGVFGAILAVARGMIP) traverse the membrane as a helical segment. Over 560–605 (DEHVVFEPEAMLREVIEQTHYLPQDWKGRFHSAQVHQAFGQLYTLK) the chain is Cytoplasmic. Residues 606–626 (IYIFLQELLSVVTTPFVLWLS) lie within the membrane without spanning it. At 627-788 (LPACAPDLID…SGGAAGASRW (162 aa)) the chain is on the cytoplasmic side. Disordered regions lie at residues 668–706 (MGGA…MSQA) and 742–762 (ATTL…PTGV). The segment covering 679–689 (QQQQQQQQQQQ) has biased composition (low complexity).

This sequence belongs to the ATG9 family. As to quaternary structure, homotrimer; forms a homotrimer with a central pore that forms a path between the two membrane leaflets. Post-translationally, phosphorylated by ATG1. ATG1 phosphorylation is required for preautophagosome elongation.

It localises to the preautophagosomal structure membrane. Its subcellular location is the cytoplasmic vesicle membrane. The protein localises to the golgi apparatus membrane. It is found in the endoplasmic reticulum membrane. The enzyme catalyses a 1,2-diacyl-sn-glycero-3-phosphocholine(in) = a 1,2-diacyl-sn-glycero-3-phosphocholine(out). The catalysed reaction is a 1,2-diacyl-sn-glycero-3-phospho-L-serine(in) = a 1,2-diacyl-sn-glycero-3-phospho-L-serine(out). It carries out the reaction a 1,2-diacyl-sn-glycero-3-phosphoethanolamine(in) = a 1,2-diacyl-sn-glycero-3-phosphoethanolamine(out). It catalyses the reaction a 1,2-diacyl-sn-glycero-3-phospho-(1D-myo-inositol-3-phosphate)(in) = a 1,2-diacyl-sn-glycero-3-phospho-(1D-myo-inositol-3-phosphate)(out). Functionally, phospholipid scramblase involved in autophagy and cytoplasm to vacuole transport (Cvt) vesicle formation. Cycles between the preautophagosomal structure/phagophore assembly site (PAS) and the cytoplasmic vesicle pool and supplies membrane for the growing autophagosome. Lipid scramblase activity plays a key role in preautophagosomal structure/phagophore assembly by distributing the phospholipids that arrive through ATG2 from the cytoplasmic to the luminal leaflet of the bilayer, thereby driving autophagosomal membrane expansion. Required for mitophagy. Also involved in endoplasmic reticulum-specific autophagic process and is essential for the survival of cells subjected to severe ER stress. Different machineries are required for anterograde trafficking to the PAS during either the Cvt pathway or bulk autophagy and for retrograde trafficking. The sequence is that of Autophagy-related protein 9 (ATG9) from Mycosarcoma maydis (Corn smut fungus).